We begin with the raw amino-acid sequence, 75 residues long: High-potential iron-sulfur protein (75 aa).

[4Fe-4S] cluster contacts are provided by Cys-38, Cys-41, Cys-54, and Cys-68.

As to quaternary structure, homodimer. Monomer at different ionic strengths.

Functionally, specific class of high-redox-potential 4Fe-4S ferredoxins. Functions in anaerobic electron transport in most purple and in some other photosynthetic bacteria and in at least one genus (Paracoccus) of halophilic, denitrifying bacteria. Competent in photosynthetic electron transfer to oxidized cytochrome bc1 complex via the membrane-bound c-type tetraheme. The polypeptide is High-potential iron-sulfur protein (hip) (Rhodoferax fermentans).